The sequence spans 217 residues: Adenylate kinase (217 aa).

Residue 10-15 (GSGKGT) participates in ATP binding. Residues 30-59 (STGDLLRAAVAAGSELGKQAKAAMDAGELV) form an NMP region. AMP-binding positions include Thr31, Arg36, 57–59 (ELV), 85–88 (GFPR), and Gln92. Residues 126-164 (GRRTCQACGAIYNIYFSPPEVDHRCDKCNSDQLVQRSDD) form an LID region. Residue Arg127 participates in ATP binding. Cys130 and Cys133 together coordinate Zn(2+). 136 to 137 (IY) contributes to the ATP binding site. Zn(2+) contacts are provided by Cys150 and Cys153. Arg161 and Arg172 together coordinate AMP. Asp200 serves as a coordination point for ATP.

It belongs to the adenylate kinase family. As to quaternary structure, monomer.

It localises to the cytoplasm. The enzyme catalyses AMP + ATP = 2 ADP. It functions in the pathway purine metabolism; AMP biosynthesis via salvage pathway; AMP from ADP: step 1/1. Catalyzes the reversible transfer of the terminal phosphate group between ATP and AMP. Plays an important role in cellular energy homeostasis and in adenine nucleotide metabolism. This is Adenylate kinase from Nitrosococcus oceani (strain ATCC 19707 / BCRC 17464 / JCM 30415 / NCIMB 11848 / C-107).